A 207-amino-acid polypeptide reads, in one-letter code: GTP-binding protein Rheb homolog 1 (207 aa).

8 residues coordinate GTP: Gly-25, Lys-26, Ser-27, Tyr-42, Thr-45, Asn-126, Asp-129, and Ala-157. Ser-27 provides a ligand contact to Mg(2+). The Effector region signature appears at Tyr-42–His-50. Position 45 (Thr-45) interacts with Mg(2+). Residues Asn-180–Lys-193 are compositionally biased toward polar residues. Positions Asn-180 to Ser-207 are disordered. Residues Pro-196 to Ser-207 are compositionally biased toward basic and acidic residues. Cys-204 is subject to Cysteine methyl ester. Residue Cys-204 is the site of S-farnesyl cysteine attachment. Residues Ser-205–Ser-207 constitute a propeptide, removed in mature form.

The protein belongs to the small GTPase superfamily. Rheb family.

It is found in the cell membrane. It catalyses the reaction GTP + H2O = GDP + phosphate + H(+). Binds GTP and exhibits intrinsic GTPase activity. This Caenorhabditis elegans protein is GTP-binding protein Rheb homolog 1 (rheb-1).